The primary structure comprises 156 residues: Ribosomal RNA large subunit methyltransferase H (156 aa).

S-adenosyl-L-methionine contacts are provided by residues leucine 73, glycine 104, and 123 to 128 (LGALTL).

It belongs to the RNA methyltransferase RlmH family. As to quaternary structure, homodimer.

Its subcellular location is the cytoplasm. The enzyme catalyses pseudouridine(1915) in 23S rRNA + S-adenosyl-L-methionine = N(3)-methylpseudouridine(1915) in 23S rRNA + S-adenosyl-L-homocysteine + H(+). Specifically methylates the pseudouridine at position 1915 (m3Psi1915) in 23S rRNA. The protein is Ribosomal RNA large subunit methyltransferase H of Dichelobacter nodosus (strain VCS1703A).